The sequence spans 246 residues: ABC transporter ATP-binding protein NatA (246 aa).

An ABC transporter domain is found at isoleucine 2 to phenylalanine 237. Glycine 38 to threonine 45 contacts ATP.

The protein belongs to the ABC transporter superfamily. As to quaternary structure, the complex is composed of NatA and NatB.

It catalyses the reaction Na(+)(in) + ATP + H2O = Na(+)(out) + ADP + phosphate + H(+). Functionally, part of an ABC transporter that catalyzes ATP-dependent electrogenic sodium extrusion. The sequence is that of ABC transporter ATP-binding protein NatA from Bacillus subtilis (strain 168).